The primary structure comprises 370 residues: Chorismate synthase (370 aa).

NADP(+) is bound by residues Arg-48 and Arg-54. Residues 130–132, 242–243, Gly-287, 302–306, and Arg-328 contribute to the FMN site; these read RSS, NA, and KPTSS.

It belongs to the chorismate synthase family. Homotetramer. FMNH2 is required as a cofactor.

It catalyses the reaction 5-O-(1-carboxyvinyl)-3-phosphoshikimate = chorismate + phosphate. Its pathway is metabolic intermediate biosynthesis; chorismate biosynthesis; chorismate from D-erythrose 4-phosphate and phosphoenolpyruvate: step 7/7. In terms of biological role, catalyzes the anti-1,4-elimination of the C-3 phosphate and the C-6 proR hydrogen from 5-enolpyruvylshikimate-3-phosphate (EPSP) to yield chorismate, which is the branch point compound that serves as the starting substrate for the three terminal pathways of aromatic amino acid biosynthesis. This reaction introduces a second double bond into the aromatic ring system. The protein is Chorismate synthase of Xanthobacter autotrophicus (strain ATCC BAA-1158 / Py2).